The primary structure comprises 658 residues: Protein teflon (658 aa).

The C2H2-type 1 zinc finger occupies 33 to 56 (LYCHFCRDLFTQLPEFLRHLQSNH). The disordered stretch occupies residues 80–131 (DKAHEDAQSAGHNSSSGDSRSLMNSEDSRAIDGSEENSDNSPVKPEQIGKQN). The segment covering 89-104 (AGHNSSSGDSRSLMNS) has biased composition (polar residues). 2 C2H2-type zinc fingers span residues 608-630 (YFCK…LISH) and 634-657 (FQCT…RNAH).

Belongs to the Teflon family.

The protein resides in the nucleus. It localises to the chromosome. Specifically required in males for proper segregation of autosomal bivalents at meiosis I. Expression is required in the male germ line prior to spermatocyte stage S4. May have a role as a bridging molecule maintaining adhesion to hold autosome bivalents together via heterochromatic connections. The chain is Protein teflon from Drosophila simulans (Fruit fly).